A 306-amino-acid polypeptide reads, in one-letter code: tRNA dimethylallyltransferase 1 (306 aa).

13–20 lines the ATP pocket; the sequence is GPTASGKT. 15–20 contacts substrate; that stretch reads TASGKT. The tract at residues 38 to 41 is interaction with substrate tRNA; it reads DSRQ.

It belongs to the IPP transferase family. Monomer. Requires Mg(2+) as cofactor.

It carries out the reaction adenosine(37) in tRNA + dimethylallyl diphosphate = N(6)-dimethylallyladenosine(37) in tRNA + diphosphate. Functionally, catalyzes the transfer of a dimethylallyl group onto the adenine at position 37 in tRNAs that read codons beginning with uridine, leading to the formation of N6-(dimethylallyl)adenosine (i(6)A). The chain is tRNA dimethylallyltransferase 1 from Azobacteroides pseudotrichonymphae genomovar. CFP2.